We begin with the raw amino-acid sequence, 122 residues long: Large ribosomal subunit protein uL14 (122 aa).

Belongs to the universal ribosomal protein uL14 family. As to quaternary structure, part of the 50S ribosomal subunit. Forms a cluster with proteins L3 and L19. In the 70S ribosome, L14 and L19 interact and together make contacts with the 16S rRNA in bridges B5 and B8.

Binds to 23S rRNA. Forms part of two intersubunit bridges in the 70S ribosome. The polypeptide is Large ribosomal subunit protein uL14 (Corynebacterium diphtheriae (strain ATCC 700971 / NCTC 13129 / Biotype gravis)).